Here is a 458-residue protein sequence, read N- to C-terminus: Translation initiation factor eIF2B subunit gamma (458 aa).

S291 is subject to Phosphoserine.

It belongs to the eIF-2B gamma/epsilon subunits family. In terms of assembly, component of the translation initiation factor 2B (eIF2B) complex which is a heterodecamer of two sets of five different subunits: alpha, beta, gamma, delta and epsilon. Subunits alpha, beta and delta comprise a regulatory subcomplex and subunits epsilon and gamma comprise a catalytic subcomplex. Within the complex, the hexameric regulatory complex resides at the center, with the two heterodimeric catalytic subcomplexes bound on opposite sides.

It is found in the cytoplasm. The protein resides in the cytosol. Acts as a component of the translation initiation factor 2B (eIF2B) complex, which catalyzes the exchange of GDP for GTP on the eukaryotic initiation factor 2 (eIF2) complex gamma subunit. Its guanine nucleotide exchange factor activity is repressed when bound to eIF2 complex phosphorylated on the alpha subunit, thereby limiting the amount of methionyl-initiator methionine tRNA available to the ribosome and consequently global translation is repressed. This is Translation initiation factor eIF2B subunit gamma (tif223) from Schizosaccharomyces pombe (strain 972 / ATCC 24843) (Fission yeast).